A 256-amino-acid polypeptide reads, in one-letter code: Type III pantothenate kinase (256 aa).

6–13 (DVGNSNIV) lines the ATP pocket. Substrate contacts are provided by residues Tyr100 and 107-110 (GADR). Asp109 serves as the catalytic Proton acceptor. Position 129 (Asp129) interacts with K(+). Position 132 (Thr132) interacts with ATP. Thr184 is a substrate binding site.

Belongs to the type III pantothenate kinase family. Homodimer. The cofactor is NH4(+). K(+) is required as a cofactor.

Its subcellular location is the cytoplasm. The catalysed reaction is (R)-pantothenate + ATP = (R)-4'-phosphopantothenate + ADP + H(+). It participates in cofactor biosynthesis; coenzyme A biosynthesis; CoA from (R)-pantothenate: step 1/5. Functionally, catalyzes the phosphorylation of pantothenate (Pan), the first step in CoA biosynthesis. In Geotalea daltonii (strain DSM 22248 / JCM 15807 / FRC-32) (Geobacter daltonii), this protein is Type III pantothenate kinase.